Here is a 302-residue protein sequence, read N- to C-terminus: MDTPLDELQWKSPEWIQAFGLRTDNVLDYFAESPFFDKTANNHVIKMQRQFSQLPNNGAAAGSMNPETMRDAHSEDMGQEQEFSYVDPIRRAILEKYVVHAFLERELMKVRGIEYVLANVREPDFWVIKKQRRTSPTAIEPLQTYYIVGANVYQSPTVFKIVQSRLLACSSHLSATLAELNNLVEFKPSQGVQYKNILDMPVTTRKTGNTANVGSVPGTISASLNMPMVNTGRLNSAGAATIGTSGVPNSAGMTGANTMATGQTGATSRFENGSSRSSTDAISTDTLDKLLITSMKSTPEYI.

The segment at 260–281 is disordered; that stretch reads ATGQTGATSRFENGSSRSSTDA.

This sequence belongs to the Mediator complex subunit 6 family. As to quaternary structure, component of the Mediator complex.

It localises to the nucleus. Component of the Mediator complex, a coactivator involved in the regulated transcription of nearly all RNA polymerase II-dependent genes. Mediator functions as a bridge to convey information from gene-specific regulatory proteins to the basal RNA polymerase II transcription machinery. Mediator is recruited to promoters by direct interactions with regulatory proteins and serves as a scaffold for the assembly of a functional preinitiation complex with RNA polymerase II and the general transcription factors. The sequence is that of Mediator of RNA polymerase II transcription subunit 6 (MED6) from Candida glabrata (strain ATCC 2001 / BCRC 20586 / JCM 3761 / NBRC 0622 / NRRL Y-65 / CBS 138) (Yeast).